The primary structure comprises 493 residues: Aspartyl/glutamyl-tRNA(Asn/Gln) amidotransferase subunit B (493 aa).

The segment at 473–493 (KSGGKANPKQAADLVNKRLTE) is disordered.

It belongs to the GatB/GatE family. GatB subfamily. Heterotrimer of A, B and C subunits.

The enzyme catalyses L-glutamyl-tRNA(Gln) + L-glutamine + ATP + H2O = L-glutaminyl-tRNA(Gln) + L-glutamate + ADP + phosphate + H(+). The catalysed reaction is L-aspartyl-tRNA(Asn) + L-glutamine + ATP + H2O = L-asparaginyl-tRNA(Asn) + L-glutamate + ADP + phosphate + 2 H(+). In terms of biological role, allows the formation of correctly charged Asn-tRNA(Asn) or Gln-tRNA(Gln) through the transamidation of misacylated Asp-tRNA(Asn) or Glu-tRNA(Gln) in organisms which lack either or both of asparaginyl-tRNA or glutaminyl-tRNA synthetases. The reaction takes place in the presence of glutamine and ATP through an activated phospho-Asp-tRNA(Asn) or phospho-Glu-tRNA(Gln). This is Aspartyl/glutamyl-tRNA(Asn/Gln) amidotransferase subunit B from Treponema denticola (strain ATCC 35405 / DSM 14222 / CIP 103919 / JCM 8153 / KCTC 15104).